The primary structure comprises 283 residues: NAD kinase (283 aa).

The active-site Proton acceptor is the aspartate 69. Residues 69–70 (DG), 138–139 (NE), lysine 166, aspartate 168, leucine 176, 179–184 (TAYNLS), and glutamine 235 each bind NAD(+).

The protein belongs to the NAD kinase family. Requires a divalent metal cation as cofactor.

The protein resides in the cytoplasm. The enzyme catalyses NAD(+) + ATP = ADP + NADP(+) + H(+). Functionally, involved in the regulation of the intracellular balance of NAD and NADP, and is a key enzyme in the biosynthesis of NADP. Catalyzes specifically the phosphorylation on 2'-hydroxyl of the adenosine moiety of NAD to yield NADP. In Helicobacter acinonychis (strain Sheeba), this protein is NAD kinase.